The following is a 477-amino-acid chain: ATP synthase subunit beta (477 aa).

151–158 is a binding site for ATP; the sequence is GGAGVGKT.

Belongs to the ATPase alpha/beta chains family. As to quaternary structure, F-type ATPases have 2 components, CF(1) - the catalytic core - and CF(0) - the membrane proton channel. CF(1) has five subunits: alpha(3), beta(3), gamma(1), delta(1), epsilon(1). CF(0) has three main subunits: a(1), b(2) and c(9-12). The alpha and beta chains form an alternating ring which encloses part of the gamma chain. CF(1) is attached to CF(0) by a central stalk formed by the gamma and epsilon chains, while a peripheral stalk is formed by the delta and b chains.

The protein resides in the cell inner membrane. It carries out the reaction ATP + H2O + 4 H(+)(in) = ADP + phosphate + 5 H(+)(out). In terms of biological role, produces ATP from ADP in the presence of a proton gradient across the membrane. The catalytic sites are hosted primarily by the beta subunits. The chain is ATP synthase subunit beta from Bradyrhizobium diazoefficiens (strain JCM 10833 / BCRC 13528 / IAM 13628 / NBRC 14792 / USDA 110).